Consider the following 607-residue polypeptide: Elongation factor 4 (607 aa).

The 183-residue stretch at 11-193 folds into the tr-type G domain; it reads SKIRNFSIIA…QIVEKVPAPA (183 aa). Residues 23 to 28 and 140 to 143 contribute to the GTP site; these read DHGKST and NKID.

The protein belongs to the TRAFAC class translation factor GTPase superfamily. Classic translation factor GTPase family. LepA subfamily.

Its subcellular location is the cell membrane. It carries out the reaction GTP + H2O = GDP + phosphate + H(+). In terms of biological role, required for accurate and efficient protein synthesis under certain stress conditions. May act as a fidelity factor of the translation reaction, by catalyzing a one-codon backward translocation of tRNAs on improperly translocated ribosomes. Back-translocation proceeds from a post-translocation (POST) complex to a pre-translocation (PRE) complex, thus giving elongation factor G a second chance to translocate the tRNAs correctly. Binds to ribosomes in a GTP-dependent manner. The chain is Elongation factor 4 from Bacillus cereus (strain B4264).